Reading from the N-terminus, the 339-residue chain is Anthranilate phosphoribosyltransferase (339 aa).

Residues G81, 84 to 85 (GD), S89, 91 to 94 (NVSS), 109 to 117 (KHGNRALSS), and A121 contribute to the 5-phospho-alpha-D-ribose 1-diphosphate site. G81 contributes to the anthranilate binding site. S93 contacts Mg(2+). Residue N112 participates in anthranilate binding. R167 is a binding site for anthranilate. The Mg(2+) site is built by D225 and E226.

Belongs to the anthranilate phosphoribosyltransferase family. Homodimer. It depends on Mg(2+) as a cofactor.

It catalyses the reaction N-(5-phospho-beta-D-ribosyl)anthranilate + diphosphate = 5-phospho-alpha-D-ribose 1-diphosphate + anthranilate. It participates in amino-acid biosynthesis; L-tryptophan biosynthesis; L-tryptophan from chorismate: step 2/5. Catalyzes the transfer of the phosphoribosyl group of 5-phosphorylribose-1-pyrophosphate (PRPP) to anthranilate to yield N-(5'-phosphoribosyl)-anthranilate (PRA). This Brucella suis biovar 1 (strain 1330) protein is Anthranilate phosphoribosyltransferase.